A 251-amino-acid polypeptide reads, in one-letter code: L-ascorbate peroxidase 2, cytosolic (251 aa).

His-43 functions as the Proton acceptor in the catalytic mechanism. Positions 113–137 are disordered; it reads EVPFHPGRQDKPEPPPEGRLPDATQ. The span at 119-132 shows a compositional bias: basic and acidic residues; that stretch reads GRQDKPEPPPEGRL. His-164 lines the heme b pocket. Residues Thr-165, Thr-181, Asn-183, Ile-186, and Asp-188 each coordinate K(+).

Belongs to the peroxidase family. Ascorbate peroxidase subfamily. Heme b serves as cofactor. As to expression, expressed in aerial vegetative parts and reproductive organs. Expressed in roots, leaves, stems and flowers. Expressed in young leaves, internodes, blade ears, stems and anthers.

The protein localises to the cytoplasm. The enzyme catalyses L-ascorbate + H2O2 = L-dehydroascorbate + 2 H2O. Inhibited by p-chloromercuriphenylsulfonic acid (CMPSA). In terms of biological role, plays a key role in hydrogen peroxide removal. Plays an important role in plant growth and development by protecting the seedlings from abiotic stresses through scavenging reactive oxygen species. Required for pollen viability. This Oryza sativa subsp. japonica (Rice) protein is L-ascorbate peroxidase 2, cytosolic.